The primary structure comprises 187 residues: CASP-like protein 3A2 (187 aa).

Over 1–24 (MTSNGEGGEVVAKRRRKGIKELVQ) the chain is Cytoplasmic. A helical transmembrane segment spans residues 25–45 (VALRGGCLAASATAMAVMLTA). The Extracellular portion of the chain corresponds to 46–71 (TEEGVADIYGFKLTLSSNWSFSPSYQ). A glycan (N-linked (GlcNAc...) asparagine) is linked at asparagine 63. The chain crosses the membrane as a helical span at residues 72 to 92 (YVVGACAGTVLYSLLQLCLGV). Residues 93-107 (YRLVTGSPITPSRFQ) are Cytoplasmic-facing. The chain crosses the membrane as a helical span at residues 108-128 (AWLCFTSDQLFCYLMMSAGSA). Topologically, residues 129 to 162 (GSGVTNLNKTGIRHTPLPDFCKTLSSFCNHVALS) are extracellular. Asparagine 136 carries N-linked (GlcNAc...) asparagine glycosylation. Residues 163–183 (LLLVFLSFIFLASSSFFTVLV) form a helical membrane-spanning segment. Topologically, residues 184-187 (LSTP) are cytoplasmic.

This sequence belongs to the Casparian strip membrane proteins (CASP) family. In terms of assembly, homodimer and heterodimers.

Its subcellular location is the cell membrane. The protein is CASP-like protein 3A2 of Arabidopsis thaliana (Mouse-ear cress).